We begin with the raw amino-acid sequence, 171 residues long: Shikimate kinase (171 aa).

14–19 (GAGKST) contacts ATP. Residue S18 coordinates Mg(2+). 3 residues coordinate substrate: D36, R60, and G82. R120 serves as a coordination point for ATP. Position 139 (R139) interacts with substrate. Q156 lines the ATP pocket.

Belongs to the shikimate kinase family. In terms of assembly, monomer. Mg(2+) is required as a cofactor.

Its subcellular location is the cytoplasm. It carries out the reaction shikimate + ATP = 3-phosphoshikimate + ADP + H(+). Its pathway is metabolic intermediate biosynthesis; chorismate biosynthesis; chorismate from D-erythrose 4-phosphate and phosphoenolpyruvate: step 5/7. Catalyzes the specific phosphorylation of the 3-hydroxyl group of shikimic acid using ATP as a cosubstrate. The protein is Shikimate kinase of Shewanella pealeana (strain ATCC 700345 / ANG-SQ1).